The chain runs to 320 residues: Ferrochelatase (320 aa).

Fe cation contacts are provided by histidine 194 and glutamate 275.

This sequence belongs to the ferrochelatase family.

The protein localises to the cytoplasm. The enzyme catalyses heme b + 2 H(+) = protoporphyrin IX + Fe(2+). It functions in the pathway porphyrin-containing compound metabolism; protoheme biosynthesis; protoheme from protoporphyrin-IX: step 1/1. Functionally, catalyzes the ferrous insertion into protoporphyrin IX. The chain is Ferrochelatase from Enterobacter sp. (strain 638).